The sequence spans 190 residues: Elongation factor P-like protein (190 aa).

This sequence belongs to the elongation factor P family.

The chain is Elongation factor P-like protein from Klebsiella pneumoniae (strain 342).